Consider the following 308-residue polypeptide: Olfactory receptor 2D2 (308 aa).

The Extracellular segment spans residues 1–25 (MRQINQTQVTEFLLLGLSDGPHTEQ). N-linked (GlcNAc...) asparagine glycosylation occurs at N5. The helical transmembrane segment at 26 to 49 (LLFIVLLGVYLVTVLGNLLLISLV) threads the bilayer. Topologically, residues 50–57 (HVDSQLHT) are cytoplasmic. A helical transmembrane segment spans residues 58 to 79 (PMYFFLCNLSLADLCFSTNIVP). The Extracellular portion of the chain corresponds to 80 to 100 (QALVHLLSRKKVIAFTLCAAR). Residues 101–120 (LLFFLIFGCTQCALLAVMSY) form a helical membrane-spanning segment. Residues 121 to 139 (DRYVAICNPLRYPNIMTWK) are Cytoplasmic-facing. The chain crosses the membrane as a helical span at residues 140–158 (VCVQLATGSWTSGILVSVV). Residues 159–195 (DTTFILRLPYRGSNSIAHFFCEAPALLILASTDTHAS) lie on the Extracellular side of the membrane. A helical transmembrane segment spans residues 196–219 (EMAIFLMGVVILLIPVFLILVSYG). Topologically, residues 220-236 (RIIVTVVKMKSTVGSLK) are cytoplasmic. The chain crosses the membrane as a helical span at residues 237–259 (AFSTCGSHLMVVILFYGSAIITY). Residues 260–270 (MTPKSSKQQEK) are Extracellular-facing. The chain crosses the membrane as a helical span at residues 271 to 290 (SVSVFYAIVTPMLNPLIYSL). Residues 291–308 (RNKDVKAALRKVATRNFP) lie on the Cytoplasmic side of the membrane.

The protein belongs to the G-protein coupled receptor 1 family.

It is found in the cell membrane. Functionally, odorant receptor. This Homo sapiens (Human) protein is Olfactory receptor 2D2 (OR2D2).